Here is a 282-residue protein sequence, read N- to C-terminus: 4-hydroxybenzoate octaprenyltransferase (282 aa).

9 helical membrane passes run 17 to 37 (IGIL…NQGF), 40 to 60 (IDLL…GCVI), 90 to 110 (AFIL…KLPI), 113 to 133 (FYFA…KRFL), 135 to 155 (APQL…FIAS), 163 to 183 (FVVL…MYAM), 207 to 227 (LIIA…AINK), 231 to 251 (WFFY…LKLI), and 262 to 282 (AFLV…LALI).

It belongs to the UbiA prenyltransferase family. Requires Mg(2+) as cofactor.

The protein localises to the cell inner membrane. It carries out the reaction all-trans-octaprenyl diphosphate + 4-hydroxybenzoate = 4-hydroxy-3-(all-trans-octaprenyl)benzoate + diphosphate. It functions in the pathway cofactor biosynthesis; ubiquinone biosynthesis. In terms of biological role, catalyzes the prenylation of para-hydroxybenzoate (PHB) with an all-trans polyprenyl group. Mediates the second step in the final reaction sequence of ubiquinone-8 (UQ-8) biosynthesis, which is the condensation of the polyisoprenoid side chain with PHB, generating the first membrane-bound Q intermediate 3-octaprenyl-4-hydroxybenzoate. In Legionella pneumophila (strain Paris), this protein is 4-hydroxybenzoate octaprenyltransferase.